Here is a 912-residue protein sequence, read N- to C-terminus: Non-lysosomal glucosylceramidase (912 aa).

The tract at residues 886 to 912 (HKKNSSRPAVTQGTAPSQPECGPKRSL) is disordered. A compositionally biased stretch (polar residues) spans 891 to 902 (SRPAVTQGTAPS).

The protein belongs to the non-lysosomal glucosylceramidase family.

The protein localises to the endoplasmic reticulum membrane. Its subcellular location is the golgi apparatus membrane. It carries out the reaction a beta-D-glucosyl-(1&lt;-&gt;1')-N-acylsphing-4-enine + H2O = an N-acylsphing-4-enine + D-glucose. It catalyses the reaction a beta-D-galactosyl-(1&lt;-&gt;1')-N-acylsphing-4-enine + H2O = an N-acylsphing-4-enine + D-galactose. The catalysed reaction is beta-D-glucosyl-(1-&gt;3)-O-lithocholate + H2O = lithocholate + D-glucose. The enzyme catalyses beta-D-glucosyl-(1-&gt;3)-O-chenodeoxycholate + H2O = chenodeoxycholate + D-glucose. It carries out the reaction a di-trans,poly-cis-dolichyl beta-D-glucosyl phosphate + chenodeoxycholate = beta-D-glucosyl-(1-&gt;3)-O-chenodeoxycholate + a di-trans,poly-cis-dolichyl phosphate + H(+). It catalyses the reaction octyl beta-D-glucose + chenodeoxycholate = beta-D-glucosyl-(1-&gt;3)-O-chenodeoxycholate + octan-1-ol. The catalysed reaction is cholesteryl 3-beta-D-glucoside + H2O = cholesterol + D-glucose. The enzyme catalyses a beta-D-glucosyl-(1&lt;-&gt;1')-N-acylsphing-4-enine + cholesterol = cholesteryl 3-beta-D-glucoside + an N-acylsphing-4-enine. It carries out the reaction beta-D-glucosyl-N-(9Z-octadecenoyl)-sphing-4E-enine + cholesterol = N-(9Z-octadecenoyl)-sphing-4-enine + cholesteryl 3-beta-D-glucoside. It catalyses the reaction a beta-D-galactosyl-(1&lt;-&gt;1')-N-acylsphing-4-enine + cholesterol = cholesteryl 3-beta-D-galactoside + an N-acylsphing-4-enine. The catalysed reaction is 1-(beta-D-galactosyl)-N-dodecanoylsphing-4-enine + cholesterol = cholesteryl 3-beta-D-galactoside + N-dodecanoylsphing-4-enine. It functions in the pathway lipid metabolism; sphingolipid metabolism. It participates in steroid metabolism; cholesterol metabolism. Its activity is regulated as follows. Enzymatic activity is dependent on membrane association and requires the presence of lipids. In terms of biological role, non-lysosomal glucosylceramidase that catalyzes the hydrolysis of glucosylceramides/GlcCers (such as beta-D-glucosyl-(1&lt;-&gt;1')-N-acylsphing-4-enine) to free glucose and ceramides (such as N-acylsphing-4-enine). GlcCers are membrane glycosphingolipids that have a wide intracellular distribution. They are the main precursors of more complex glycosphingolipids that play a role in cellular growth, differentiation, adhesion, signaling, cytoskeletal dynamics and membrane properties. Involved in the transglucosylation of cholesterol, transfers glucose from GlcCer to cholesterol, thereby modifying its water solubility and biological properties. Under specific conditions, may catalyze the reverse reaction, transferring glucose from cholesteryl-3-beta-D-glucoside to ceramide (such as N-acylsphing-4-enine). May play a role in the metabolism of bile acids. Able to hydrolyze bile acid 3-O-glucosides as well as to produce bile acid-glucose conjugates thanks to a bile acid glucosyl transferase activity. Catalyzes the hydrolysis of galactosylceramides/GalCers (such as beta-D-galactosyl-(1&lt;-&gt;1')-N-acylsphing-4-enine), as well as the galactosyl transfer between GalCers and cholesterol in vitro with lower activity compared with their activity against GlcCers. The sequence is that of Non-lysosomal glucosylceramidase from Rattus norvegicus (Rat).